The primary structure comprises 577 residues: MKTSQLFYKTSKNANKEASVLSYELLEKAGYIFKTAKGIYTYTPLFWRVALKMMDIIREELNAIGGQELVLPILHPAELWQKTGRWEAFRSEGLLYTVKDREDKEFCLAPTHEEIVSMFVSQWLSGRKQLPIHLYQIATKFRDEIRPRFGLMRAKEFLMEDSYTFSDSPEQMNEQYAKLRQAYQNIFDRLEIQYVIVEADGGKIGKGKSEEFHVLSSLGEDTLCVSGHYGANIEAAVAQPPQYTYDKDYLPIEEVDTPDVRTIENLQDFFSVPPYRIMKTLVVKLSYGEKEKFTAIGIRGDRQINLTKIGSKLNADACSLASDEEIQKHLGVEKGFIGPLNCPIDFYADETTQCMTNFICAGNVKDKHYKNVNWDRDIPRPEYADFLLAEAGDLCPTNNHAPYEIFEGVEVAHIFNLGTRYTEGFDVVFQDEQGKPQSCWMGTYGIGIGRTLAACIEQLADDRGIVWPKAIAPFDISILYNGGDTACEEAAEKIYKELQGYGYAPLLDDRNERLGFKLKDSDLIGIPYKLILGKTFLNSGMLEIESRSIEKFSVEPKDFVHWCKRHLPSPRVFSPIP.

Belongs to the class-II aminoacyl-tRNA synthetase family. ProS type 1 subfamily. As to quaternary structure, homodimer.

It localises to the cytoplasm. The catalysed reaction is tRNA(Pro) + L-proline + ATP = L-prolyl-tRNA(Pro) + AMP + diphosphate. Catalyzes the attachment of proline to tRNA(Pro) in a two-step reaction: proline is first activated by ATP to form Pro-AMP and then transferred to the acceptor end of tRNA(Pro). As ProRS can inadvertently accommodate and process non-cognate amino acids such as alanine and cysteine, to avoid such errors it has two additional distinct editing activities against alanine. One activity is designated as 'pretransfer' editing and involves the tRNA(Pro)-independent hydrolysis of activated Ala-AMP. The other activity is designated 'posttransfer' editing and involves deacylation of mischarged Ala-tRNA(Pro). The misacylated Cys-tRNA(Pro) is not edited by ProRS. This Chlamydia abortus (strain DSM 27085 / S26/3) (Chlamydophila abortus) protein is Proline--tRNA ligase.